A 120-amino-acid polypeptide reads, in one-letter code: Glycine cleavage system H protein (120 aa).

In terms of domain architecture, Lipoyl-binding spans 17 to 99; that stretch reads VATVGITEHA…QGAAWFFKLK (83 aa). Lys-58 carries the N6-lipoyllysine modification.

Belongs to the GcvH family. In terms of assembly, the glycine cleavage system is composed of four proteins: P, T, L and H. Requires (R)-lipoate as cofactor.

Functionally, the glycine cleavage system catalyzes the degradation of glycine. The H protein shuttles the methylamine group of glycine from the P protein to the T protein. The chain is Glycine cleavage system H protein from Sinorhizobium fredii (strain NBRC 101917 / NGR234).